The chain runs to 492 residues: Protein nucleotidyltransferase YdiU (492 aa).

ATP is bound by residues Gly-88, Gly-90, Arg-91, Lys-111, Asp-123, Gly-124, Arg-174, and Arg-181. Residue Asp-250 is the Proton acceptor of the active site. The Mg(2+) site is built by Asn-251 and Asp-260. Asp-260 serves as a coordination point for ATP.

The protein belongs to the SELO family. Requires Mg(2+) as cofactor. It depends on Mn(2+) as a cofactor.

The enzyme catalyses L-seryl-[protein] + ATP = 3-O-(5'-adenylyl)-L-seryl-[protein] + diphosphate. It catalyses the reaction L-threonyl-[protein] + ATP = 3-O-(5'-adenylyl)-L-threonyl-[protein] + diphosphate. The catalysed reaction is L-tyrosyl-[protein] + ATP = O-(5'-adenylyl)-L-tyrosyl-[protein] + diphosphate. It carries out the reaction L-histidyl-[protein] + UTP = N(tele)-(5'-uridylyl)-L-histidyl-[protein] + diphosphate. The enzyme catalyses L-seryl-[protein] + UTP = O-(5'-uridylyl)-L-seryl-[protein] + diphosphate. It catalyses the reaction L-tyrosyl-[protein] + UTP = O-(5'-uridylyl)-L-tyrosyl-[protein] + diphosphate. Its function is as follows. Nucleotidyltransferase involved in the post-translational modification of proteins. It can catalyze the addition of adenosine monophosphate (AMP) or uridine monophosphate (UMP) to a protein, resulting in modifications known as AMPylation and UMPylation. This is Protein nucleotidyltransferase YdiU from Rhodopseudomonas palustris (strain HaA2).